Consider the following 473-residue polypeptide: Photosystem II CP43 reaction center protein (473 aa).

The propeptide occupies 1–14 (MKTLYSLRRFYHVE). Thr-15 is modified (N-acetylthreonine). At Thr-15 the chain carries Phosphothreonine. Helical transmembrane passes span 69–93 (LFEVAHFVPEKPMYEQGLILLPHLA), 134–155 (LLGPETLEESFPFFGYVWKDRN), 178–200 (KALYFGGVYDTWAPGGGDVRKIT), 255–275 (KPFAWARRALVWSGEAYLSYS), and 291–312 (WFNNTAYPSEFYGPTGPEASQA). Glu-367 is a [CaMn4O5] cluster binding site. Residues 447 to 471 (RARAAAAGFEKGIDRDFEPVLSMTP) form a helical membrane-spanning segment.

This sequence belongs to the PsbB/PsbC family. PsbC subfamily. As to quaternary structure, PSII is composed of 1 copy each of membrane proteins PsbA, PsbB, PsbC, PsbD, PsbE, PsbF, PsbH, PsbI, PsbJ, PsbK, PsbL, PsbM, PsbT, PsbX, PsbY, PsbZ, Psb30/Ycf12, at least 3 peripheral proteins of the oxygen-evolving complex and a large number of cofactors. It forms dimeric complexes. Requires Binds multiple chlorophylls and provides some of the ligands for the Ca-4Mn-5O cluster of the oxygen-evolving complex. It may also provide a ligand for a Cl- that is required for oxygen evolution. PSII binds additional chlorophylls, carotenoids and specific lipids. as cofactor.

It is found in the plastid. It localises to the chloroplast thylakoid membrane. Functionally, one of the components of the core complex of photosystem II (PSII). It binds chlorophyll and helps catalyze the primary light-induced photochemical processes of PSII. PSII is a light-driven water:plastoquinone oxidoreductase, using light energy to abstract electrons from H(2)O, generating O(2) and a proton gradient subsequently used for ATP formation. The protein is Photosystem II CP43 reaction center protein of Manihot esculenta (Cassava).